Reading from the N-terminus, the 477-residue chain is Transposase for insertion sequence element IS231F (477 aa).

Belongs to the transposase 11 family.

In terms of biological role, involved in the transposition of the insertion sequence. The polypeptide is Transposase for insertion sequence element IS231F (Bacillus thuringiensis subsp. israelensis).